We begin with the raw amino-acid sequence, 1851 residues long: Voltage-dependent calcium channel type A subunit alpha-1 (1851 aa).

At 1–38 the chain is on the cytoplasmic side; that stretch reads MGGPKKEENPPGGGPTSLFILTEDNPIRKYTRFIIEWP. One copy of the I repeat lies at 25–316; sequence NPIRKYTRFI…LVLGVLSGEF (292 aa). The helical transmembrane segment at 39–57 threads the bilayer; that stretch reads PFEYAVLLTIIANCVVLAL. At 58-75 the chain is on the extracellular side; the sequence is EEHLPGGDKTVLAQKLEK. The chain crosses the membrane as a helical span at residues 76 to 95; sequence TEAYFLCIFCVEASLKILAL. The Cytoplasmic segment spans residues 96–107; the sequence is GLVLHKHSYLRN. A helical transmembrane segment spans residues 108–128; sequence IWNIMDFFVVVTGFMTQYPQI. At 129-133 the chain is on the extracellular side; the sequence is GPEVD. Residues 134–152 form a helical membrane-spanning segment; sequence LRTLRAIRVLRPLKLVSGI. At 153 to 171 the chain is on the cytoplasmic side; sequence PSLQVVLKSIIKAMAPLLQ. The helical transmembrane segment at 172 to 191 threads the bilayer; that stretch reads IGLLVLFAIVIFAIIGLEFY. Over 192-288 the chain is Extracellular; sequence SGALHKTCYS…WTNDALGSAF (97 aa). Residues asparagine 234 and asparagine 235 are each glycosylated (N-linked (GlcNAc...) asparagine). A helical membrane pass occupies residues 289 to 313; that stretch reads NWIYFVPLIVIGSFFMLNLVLGVLS. Over 314-441 the chain is Cytoplasmic; that stretch reads GEFSNERNRV…FWIRHTVKTQ (128 aa). The tract at residues 381-417 is disordered; it reads RKKLKSLGKSKSTDTEEEEAEEDYGDDGYLKTRSKPQ. Acidic residues predominate over residues 395 to 406; the sequence is TEEEEAEEDYGD. The stretch at 427–670 is one II repeat; the sequence is EKRFRFWIRH…VFLAIAVDNL (244 aa). Residues 442–460 traverse the membrane as a helical segment; sequence WFYWFVIVLVFLNTVCVAV. Residues 461–475 lie on the Extracellular side of the membrane; that stretch reads EHYGQPSFLTEFLYY. Residues 476-495 traverse the membrane as a helical segment; the sequence is AEFIFLGLFMSEMFIKMYAL. At 496–503 the chain is on the cytoplasmic side; it reads GPRIYFES. Residues 504-522 traverse the membrane as a helical segment; it reads SFNRFDCVVISGSIFEVIW. Topologically, residues 523–531 are extracellular; the sequence is SEVKGGSFG. Residues 532–550 form a helical membrane-spanning segment; it reads LSVLRALRLLRIFKVTKYW. At 551–569 the chain is on the cytoplasmic side; it reads SSLRNLVISLLNSMRSIIS. A helical transmembrane segment spans residues 570 to 589; sequence LLFLLFLFILIFALLGMQLF. Over 590–642 the chain is Extracellular; that stretch reads GGQFNLPGGTPETNFNTFPIALLTVFQILTGEDWNEVMYQGIISQGGAQKGMI. The helical transmembrane segment at 643–667 threads the bilayer; sequence YSIYFIVLVLFGNYTLLNVFLAIAV. Over 668–767 the chain is Cytoplasmic; the sequence is DNLANAQELT…IRRGAHWVVN (100 aa). A disordered region spans residues 710-741; that stretch reads ENGDGAVAPSKSKGKKKEEEKKEEEEVTEGPK. The III repeat unit spans residues 762-1049; sequence AHWVVNLPYF…IITFQEQGEA (288 aa). A helical transmembrane segment spans residues 768-786; the sequence is LPYFDFFIMVVISMSSIAL. Topologically, residues 787-802 are extracellular; it reads AAEDPVRENSRRNKIL. The chain crosses the membrane as a helical span at residues 803–822; sequence NYFDYAFTGVFTIEMLLKIV. The Cytoplasmic portion of the chain corresponds to 823 to 834; it reads DLGVILHPGSYL. Residues 835–853 form a helical membrane-spanning segment; sequence REFWNIMDAVVVICAAVSF. Residues 854-866 lie on the Extracellular side of the membrane; that stretch reads GFDMSGSSAGQNL. A glycan (N-linked (GlcNAc...) asparagine) is linked at asparagine 865. A helical membrane pass occupies residues 867–885; sequence STIKSLRVLRVLRPLKTIK. The Cytoplasmic portion of the chain corresponds to 886-904; it reads RVPKLKAVFDCVVNSLKNV. A helical membrane pass occupies residues 905 to 924; it reads VNILIVYILFQFIFSVIGVQ. Topologically, residues 925–1013 are extracellular; it reads LFNGKFFYCT…EDRGPIQNFR (89 aa). Residues 1014–1038 traverse the membrane as a helical segment; that stretch reads IEMSIFYIVYFIVFPFFFVNIFVAL. Topologically, residues 1039–1093 are cytoplasmic; that stretch reads IIITFQEQGEAELQDGEIDKNQKSCIDFTIGARPLERYMPKNRNTFKYKVWRIVV. The stretch at 1086-1347 is one IV repeat; sequence YKVWRIVVST…DNFDYLTRDS (262 aa). A helical membrane pass occupies residues 1094-1122; that stretch reads STPFEYFIMMLIVFNTLLLMMKYHNQGDM. Topologically, residues 1123 to 1127 are extracellular; sequence YEKSL. A helical transmembrane segment spans residues 1128-1147; that stretch reads KYINMGFTGMFSVETVLKII. The Cytoplasmic segment spans residues 1148-1155; it reads GFGVKNFF. Residues 1156-1174 traverse the membrane as a helical segment; it reads KDPWNIFDLITVLGSIVDA. Over 1175-1184 the chain is Extracellular; sequence LWMEFGHDDS. Residues 1185-1203 form a helical membrane-spanning segment; it reads NSINVGFLRLFRAARLIKL. The Cytoplasmic portion of the chain corresponds to 1204–1222; sequence LRQGYTIRILLWTFVQSFK. The chain crosses the membrane as a helical span at residues 1223-1242; the sequence is ALPYVCLLIAMLFFIYAIIG. Over 1243–1308 the chain is Extracellular; it reads MQVFGNIKLG…DAEKAPGEYC (66 aa). Residues 1306-1348 form a phenylalkylamine binding region; it reads EYCGSTLAYAYFVSFIFFCSFLMLNLFVAVIMDNFDYLTRDSS. The helical transmembrane segment at 1309-1333 threads the bilayer; sequence GSTLAYAYFVSFIFFCSFLMLNLFV. The Cytoplasmic portion of the chain corresponds to 1334 to 1851; that stretch reads AVIMDNFDYL…HSDSDEEDWC (518 aa). The EF-hand domain occupies 1353–1388; it reads HHLDEFVRIWAEYDPNATGKIHYTEMYDMLKNMDPP. 5 residues coordinate Ca(2+): aspartate 1366, asparagine 1368, threonine 1370, lysine 1372, and glutamate 1377. Disordered stretches follow at residues 1513–1572, 1588–1653, 1685–1764, and 1823–1851; these read DASR…HHDI, TRHP…SPAR, RAGI…DRDR, and VLPS…EDWC. Residues 1589 to 1600 are compositionally biased toward basic residues; sequence RHPRHGNSHPRY. Residues 1604-1619 show a composition bias toward low complexity; that stretch reads SWSASTSPARSPSPSR. 2 stretches are compositionally biased toward polar residues: residues 1637 to 1649 and 1698 to 1710; these read YGTT…SRSP and KPST…TNIN. A compositionally biased stretch (basic and acidic residues) spans 1734-1764; it reads HHRDLLRDPRDMYYSSRERERDRERLRDRDR.

It belongs to the calcium channel alpha-1 subunit (TC 1.A.1.11) family. As to expression, expressed widely in the embryonic nervous system.

It is found in the membrane. Functionally, voltage-sensitive calcium channels (VSCC) mediate the entry of calcium ions into excitable cells and are also involved in a variety of calcium-dependent processes, including muscle contraction, neurotransmitter release, gene expression, cell motility, cell division and cell death. Probably encodes a dihydropyridine-insensitive current. Vital for survival to adulthood. This chain is Voltage-dependent calcium channel type A subunit alpha-1 (cac), found in Drosophila melanogaster (Fruit fly).